The following is a 456-amino-acid chain: UDP-N-acetylmuramate--L-alanine ligase (456 aa).

117 to 123 contacts ATP; sequence GTHGKTT.

The protein belongs to the MurCDEF family.

The protein localises to the cytoplasm. It catalyses the reaction UDP-N-acetyl-alpha-D-muramate + L-alanine + ATP = UDP-N-acetyl-alpha-D-muramoyl-L-alanine + ADP + phosphate + H(+). The protein operates within cell wall biogenesis; peptidoglycan biosynthesis. Cell wall formation. This Clostridium tetani (strain Massachusetts / E88) protein is UDP-N-acetylmuramate--L-alanine ligase.